The sequence spans 206 residues: Large ribosomal subunit protein uL4 (206 aa).

The tract at residues 43–94 is disordered; sequence ARSGNRAQKDREQVKHTTKKPWRQKGTGRARAGMSSSPLWRGGGRIFPNSPE. Over residues 58–70 the composition is skewed to basic residues; it reads HTTKKPWRQKGTG.

Belongs to the universal ribosomal protein uL4 family. Part of the 50S ribosomal subunit.

One of the primary rRNA binding proteins, this protein initially binds near the 5'-end of the 23S rRNA. It is important during the early stages of 50S assembly. It makes multiple contacts with different domains of the 23S rRNA in the assembled 50S subunit and ribosome. Functionally, forms part of the polypeptide exit tunnel. The sequence is that of Large ribosomal subunit protein uL4 from Polynucleobacter asymbioticus (strain DSM 18221 / CIP 109841 / QLW-P1DMWA-1) (Polynucleobacter necessarius subsp. asymbioticus).